The chain runs to 158 residues: Adenosine 5'-monophosphoramidase HNT1 (158 aa).

The HIT domain occupies 26–129 (IFCKIIKSEI…IPKRDEKSGL (104 aa)). Residues 51–52 (DI), N103, 109–111 (HQE), and 116–118 (HFH) each bind AMP. A Histidine triad motif motif is present at residues 114-118 (HVHFH). H116 (tele-AMP-histidine intermediate) is an active-site residue.

Belongs to the HINT family. As to quaternary structure, homodimer. Interacts with KIN28. It depends on Mg(2+) as a cofactor.

It carries out the reaction adenosine 5'-phosphoramidate + H2O = AMP + NH4(+). Hydrolyzes adenosine 5'-monophosphoramidate substrates such as AMP-morpholidate, AMP-N-alanine methyl ester, AMP-alpha-acetyl lysine methyl ester and AMP-NH2. Plays a role in the regulation of kinase KIN28 function. Essential for growth on galactose media at elevated temperatures. This chain is Adenosine 5'-monophosphoramidase HNT1, found in Saccharomyces cerevisiae (strain ATCC 204508 / S288c) (Baker's yeast).